The chain runs to 604 residues: Tyrosine-protein kinase transforming protein erbB (604 aa).

One can recognise a Protein kinase domain in the interval 132-399 (FKKVKVLGSG…KMARDPPRYL (268 aa)). Residues 138-146 (LGSGAFGTI) and K165 contribute to the ATP site. The Proton acceptor role is filled by D257.

This sequence belongs to the protein kinase superfamily. Tyr protein kinase family. EGF receptor subfamily.

The catalysed reaction is L-tyrosyl-[protein] + ATP = O-phospho-L-tyrosyl-[protein] + ADP + H(+). Functionally, the v-erbB oncogene transforms avian fibroblasts and erythroblasts in culture and induces sarcomas and erythroleukemias in chickens. It is a truncated and mutated version of the receptor for epidermal growth factor. This chain is Tyrosine-protein kinase transforming protein erbB (V-ERBB), found in Galliformes.